The sequence spans 411 residues: MSRSKRDNNFYSVEIADSTFTVLKRYQNLKPIGSGAQGIVCAAYDAILERNVAIKKLSRPFQNQTHAKRAYRELVLMKCVNHKNIIGLLNVFTPQKSLEEFQDVYIVMELMDANLCQVIQMELDHERMSYLLYQMLCGIKHLHSAGIIHRDLKPSNIVVKSDCTLKILDFGLARTAGTSFMMTPYVVTRYYRAPEVILGMGYKENVDLWSVGCIMGEMVCLKILFPGRDYIDQWNKVIEQLGTPCPEFMKKLQPTVRTYVENRPKYAGYSFEKLFPDVLFPADSEHNKLKASQARDLLSKMLVIDASKRISVDEALQHPYINVWYDPSEAEAPPPKIPDKQLDEREHTIEEWKELIYKEVMDLEERTKNGVIRGQPSPLGAAVINGSQHPVSSPSVNDMSSMSTDPTLASD.

A Protein kinase domain is found at 26-321; it reads YQNLKPIGSG…VDEALQHPYI (296 aa). ATP is bound by residues 32-40 and K55; that span reads IGSGAQGIV. The residue at position 116 (C116) is an S-nitrosocysteine; in inhibited form. D151 (proton acceptor) is an active-site residue. Residue T183 is modified to Phosphothreonine; by MAP2K7. The TXY signature appears at 183-185; the sequence is TPY. Y185 is subject to Phosphotyrosine; by MAP2K4. Positions 368–411 are disordered; the sequence is KNGVIRGQPSPLGAAVINGSQHPVSSPSVNDMSSMSTDPTLASD. The residue at position 377 (S377) is a Phosphoserine. Residues 390 to 403 are compositionally biased toward low complexity; sequence PVSSPSVNDMSSMS.

The protein belongs to the protein kinase superfamily. CMGC Ser/Thr protein kinase family. MAP kinase subfamily. In terms of assembly, forms a complex with MAPK8IP1 and ARHGEF28. Found in a complex with SH3RF1, RAC1, MAP3K11/MLK3, MAP2K7/MKK7 and MAPK8IP1/JIP1. Found in a complex with SH3RF1, RAC2, MAP3K7/TAK1, MAP2K7/MKK7, MAPK8IP1/JIP1 and MAPK9/JNK2. Binds to at least four scaffolding proteins, MAPK8IP1/JIP-1, MAPK8IP2/JIP-2, MAPK8IP3/JIP-3/JSAP1 and SPAG9/MAPK8IP4/JIP-4. These proteins also bind other components of the JNK signaling pathway. Interacts with TP53, WWOX. Interacts with JAMP. Interacts with NFATC4. Interacts (phosphorylated form) with NFE2; the interaction phosphorylates NFE2 in undifferentiated cells. Interacts with MECOM; regulates JNK signaling. Interacts with PIN1; this interaction mediates MAPK8 conformational changes leading to the binding of MAPK8 to its substrates. Interacts with HSF1 (via D domain and preferentially with hyperphosphorylated form); this interaction occurs under both normal growth conditions and immediately upon heat shock. Interacts with STMN2, STMN3 and STMN4. Interacts with GRIPAP1. Interacts with POU5F1; phosphorylates POU5F1 at 'Ser-347'. Interacts with HSF4. Requires Mg(2+) as cofactor. Dually phosphorylated on Thr-183 and Tyr-185 by MAP2K7 and MAP2K4, which activates the enzyme. Phosphorylated by TAOK2. Phosphorylated form is more concentrated at synapses than none-phosphorylated. Post-translationally, nitrosylated upon IFN-gamma-induced endogenous NO production, which inhibits the enzyme. May be phosphorylated at Thr-183 and Tyr-185 by MAP3K1/MEKK1.

Its subcellular location is the cytoplasm. The protein localises to the nucleus. It localises to the synapse. The enzyme catalyses L-seryl-[protein] + ATP = O-phospho-L-seryl-[protein] + ADP + H(+). It catalyses the reaction L-threonyl-[protein] + ATP = O-phospho-L-threonyl-[protein] + ADP + H(+). With respect to regulation, activated by threonine and tyrosine phosphorylation by either of two dual specificity kinases, MAP2K4 and MAP2K7. MAP2K4 shows a strong preference for Tyr-185 while MAP2K7 phosphorylates Tyr-183 preferentially. Inhibited by dual specificity phosphatases, such as DUSP1. Inhibited by SERPINB3. Inhibited by IFN-gamma-induced S-nitrosylation. Functionally, serine/threonine-protein kinase involved in various processes such as cell proliferation, differentiation, migration, transformation and programmed cell death. Extracellular stimuli such as pro-inflammatory cytokines or physical stress stimulate the stress-activated protein kinase/c-Jun N-terminal kinase (SAP/JNK) signaling pathway. In this cascade, two dual specificity kinases MAP2K4/MKK4 and MAP2K7/MKK7 phosphorylate and activate MAPK8/JNK1. In turn, MAPK8/JNK1 phosphorylates a number of transcription factors, primarily components of AP-1 such as JUN, JDP2 and ATF2 and thus regulates AP-1 transcriptional activity. Phosphorylates the replication licensing factor CDT1, inhibiting the interaction between CDT1 and the histone H4 acetylase HBO1 to replication origins. Loss of this interaction abrogates the acetylation required for replication initiation. Promotes stressed cell apoptosis by phosphorylating key regulatory factors including p53/TP53 and Yes-associates protein YAP1. In T-cells, MAPK8 and MAPK9 are required for polarized differentiation of T-helper cells into Th1 cells. Contributes to the survival of erythroid cells by phosphorylating the antagonist of cell death BAD upon EPO stimulation. Mediates starvation-induced BCL2 phosphorylation, BCL2 dissociation from BECN1, and thus activation of autophagy. Phosphorylates STMN2 and hence regulates microtubule dynamics, controlling neurite elongation in cortical neurons. In the developing brain, through its cytoplasmic activity on STMN2, negatively regulates the rate of exit from multipolar stage and of radial migration from the ventricular zone. Phosphorylates several other substrates including heat shock factor protein 4 (HSF4), the deacetylase SIRT1, ELK1, or the E3 ligase ITCH. Phosphorylates the CLOCK-BMAL1 heterodimer and plays a role in the regulation of the circadian clock. Phosphorylates the heat shock transcription factor HSF1, suppressing HSF1-induced transcriptional activity. Phosphorylates POU5F1, which results in the inhibition of POU5F1's transcriptional activity and enhances its proteasomal degradation. Phosphorylates JUND and this phosphorylation is inhibited in the presence of MEN1. In neurons, phosphorylates SYT4 which captures neuronal dense core vesicles at synapses. Phosphorylates EIF4ENIF1/4-ET in response to oxidative stress, promoting P-body assembly. Phosphorylates SIRT6 in response to oxidative stress, stimulating its mono-ADP-ribosyltransferase activity. Phosphorylates NLRP3, promoting assembly of the NLRP3 inflammasome. Phosphorylates ALKBH5 in response to reactive oxygen species (ROS), promoting ALKBH5 sumoylation and inactivation. The chain is Mitogen-activated protein kinase 8 (Mapk8) from Rattus norvegicus (Rat).